The following is a 124-amino-acid chain: Large ribosomal subunit protein uL18 (124 aa).

It belongs to the universal ribosomal protein uL18 family. Part of the 50S ribosomal subunit; part of the 5S rRNA/L5/L18/L25 subcomplex. Contacts the 5S and 23S rRNAs.

Its function is as follows. This is one of the proteins that bind and probably mediate the attachment of the 5S RNA into the large ribosomal subunit, where it forms part of the central protuberance. The chain is Large ribosomal subunit protein uL18 from Orientia tsutsugamushi (strain Boryong) (Rickettsia tsutsugamushi).